The sequence spans 224 residues: ATP synthase subunit a (224 aa).

The next 6 helical transmembrane spans lie at 17–37 (LSLN…IYWL), 72–92 (IFIS…FPYI), 99–119 (LTLT…YGWI), 125–145 (MFAH…MVCI), 170–190 (LLLT…VTFL), and 195–215 (IALL…FAVL).

It belongs to the ATPase A chain family. In terms of assembly, F-type ATPases have 2 components, CF(1) - the catalytic core - and CF(0) - the membrane proton channel. CF(1) has five subunits: alpha(3), beta(3), gamma(1), delta(1), epsilon(1). CF(0) has three main subunits: a, b and c.

It localises to the mitochondrion inner membrane. In terms of biological role, mitochondrial membrane ATP synthase (F(1)F(0) ATP synthase or Complex V) produces ATP from ADP in the presence of a proton gradient across the membrane which is generated by electron transport complexes of the respiratory chain. F-type ATPases consist of two structural domains, F(1) - containing the extramembraneous catalytic core and F(0) - containing the membrane proton channel, linked together by a central stalk and a peripheral stalk. During catalysis, ATP synthesis in the catalytic domain of F(1) is coupled via a rotary mechanism of the central stalk subunits to proton translocation. Key component of the proton channel; it may play a direct role in the translocation of protons across the membrane. The sequence is that of ATP synthase subunit a (mt:ATPase6) from Drosophila mauritiana (Fruit fly).